The following is a 296-amino-acid chain: NADH-cytochrome b5 reductase 2-A (296 aa).

Residues 15–35 (FVIGAPTIALCSYYYSSGAFL) form a helical membrane-spanning segment. An FAD-binding FR-type domain is found at 47 to 151 (NNWIDLPISR…KGPIPKWKWV (105 aa)). 154–189 (SFESITLIGGGTGITPLYQLIHAITKNPNDKTKIRL) provides a ligand contact to FAD.

The protein belongs to the flavoprotein pyridine nucleotide cytochrome reductase family. It depends on FAD as a cofactor.

The protein localises to the mitochondrion outer membrane. It catalyses the reaction 2 Fe(III)-[cytochrome b5] + NADH = 2 Fe(II)-[cytochrome b5] + NAD(+) + H(+). Its function is as follows. May mediate the reduction of outer membrane cytochrome b5. The chain is NADH-cytochrome b5 reductase 2-A (MCR1A) from Vanderwaltozyma polyspora (strain ATCC 22028 / DSM 70294 / BCRC 21397 / CBS 2163 / NBRC 10782 / NRRL Y-8283 / UCD 57-17) (Kluyveromyces polysporus).